Consider the following 161-residue polypeptide: Transcriptional repressor NrdR (161 aa).

A zinc finger spans residues 3-34 (CPSCQHTDSRVLESRAADSGKSVRRRRECLNC). An ATP-cone domain is found at 49–139 (ITVVKRSGTR…VYGKFSGISD (91 aa)).

Belongs to the NrdR family. The cofactor is Zn(2+).

Its function is as follows. Negatively regulates transcription of bacterial ribonucleotide reductase nrd genes and operons by binding to NrdR-boxes. This Synechococcus sp. (strain RCC307) protein is Transcriptional repressor NrdR.